We begin with the raw amino-acid sequence, 255 residues long: 1-(5-phosphoribosyl)-5-[(5-phosphoribosylamino)methylideneamino] imidazole-4-carboxamide isomerase (255 aa).

Aspartate 8 (proton acceptor) is an active-site residue. Aspartate 129 serves as the catalytic Proton donor.

Belongs to the HisA/HisF family.

The protein localises to the cytoplasm. It catalyses the reaction 1-(5-phospho-beta-D-ribosyl)-5-[(5-phospho-beta-D-ribosylamino)methylideneamino]imidazole-4-carboxamide = 5-[(5-phospho-1-deoxy-D-ribulos-1-ylimino)methylamino]-1-(5-phospho-beta-D-ribosyl)imidazole-4-carboxamide. It participates in amino-acid biosynthesis; L-histidine biosynthesis; L-histidine from 5-phospho-alpha-D-ribose 1-diphosphate: step 4/9. The chain is 1-(5-phosphoribosyl)-5-[(5-phosphoribosylamino)methylideneamino] imidazole-4-carboxamide isomerase from Gloeobacter violaceus (strain ATCC 29082 / PCC 7421).